We begin with the raw amino-acid sequence, 453 residues long: Plasticin (453 aa).

A head region spans residues 1–51; sequence MSHSTFSHLFSPHFGAPVYSPVSSRIGGRYVSSSVPTRSVDFRSRSSAPAP. Residues 71 to 112 are coil 1A; sequence FATRSNEKRELQELNDRFASFIEKVRHLEQQNSKLILELGQY. The IF rod domain occupies 77 to 390; the sequence is EKRELQELND…KLLEGEENRI (314 aa). The linker 1 stretch occupies residues 113-126; that stretch reads KDQHQGSTGRINEL. The coil 1B stretch occupies residues 127-222; it reads CQQEMRELRR…KMHDEEIQDV (96 aa). The linker 12 stretch occupies residues 223 to 245; sequence QVSVQSQQMKMEVMETSSRPDLT. Residues 246 to 391 are coil 2; sequence GALRDIRAQY…LLEGEENRIV (146 aa). Residues 392-453 form a tail region; it reads VPIMKMPSMS…KKDSHGQGKD (62 aa). Residues 421-453 are disordered; it reads IKTVETRDGEVVKESTKEKGRDEKKDSHGQGKD. Positions 424-453 are enriched in basic and acidic residues; sequence VETRDGEVVKESTKEKGRDEKKDSHGQGKD.

Belongs to the intermediate filament family. In terms of tissue distribution, optic nerve.

Type III neurofilament. This Carassius auratus (Goldfish) protein is Plasticin.